The following is an 87-amino-acid chain: Omega-lycotoxin-Am1b (87 aa).

An N-terminal signal peptide occupies residues 1–17 (MKLSIFFVLFFIAIAYC). A propeptide spanning residues 18–40 (QPEFLDDEEDEVEETLPVAEEGR) is cleaved from the precursor. 4 disulfide bridges follow: cysteine 44/cysteine 59, cysteine 51/cysteine 64, cysteine 58/cysteine 84, and cysteine 66/cysteine 82.

This sequence belongs to the neurotoxin omega-lctx family. In terms of tissue distribution, expressed by the venom gland.

The protein resides in the secreted. In terms of biological role, modulates Cav2.1/CACNA1A voltage-gated calcium channels (P/Q-type currents) in rat cerebellar Purkinje cells and hippocampal CA1-CA3 neurons. At saturating concentrations (&gt;10 nM) decelerates activation kinetics and slightly increases peak amplitude without affecting deactivation kinetics. In vivo, does not cause death when intravenously injected into mice. In rat models, through its activity on Cav2.1/CACNA1A, has an ameliorative effect on memory defects provoked by hyperstimulation of N-methyl-D-aspartate receptors (NMDARs) in the hippocampus. The sequence is that of Omega-lycotoxin-Am1b from Alopecosa marikovskyi (Wolf spider).